The primary structure comprises 549 residues: Oxygen-dependent choline dehydrogenase (549 aa).

4 to 33 is an FAD binding site; it reads DYVIVGSGSAGSAIAYRLSEDGRYSVIVIE. Residue His465 is the Proton acceptor of the active site. A disordered region spans residues 528–549; sequence KTPLPRSNQEPWVNPRAAVSDR.

Belongs to the GMC oxidoreductase family. The cofactor is FAD.

It catalyses the reaction choline + A = betaine aldehyde + AH2. The catalysed reaction is betaine aldehyde + NAD(+) + H2O = glycine betaine + NADH + 2 H(+). It functions in the pathway amine and polyamine biosynthesis; betaine biosynthesis via choline pathway; betaine aldehyde from choline (cytochrome c reductase route): step 1/1. In terms of biological role, involved in the biosynthesis of the osmoprotectant glycine betaine. Catalyzes the oxidation of choline to betaine aldehyde and betaine aldehyde to glycine betaine at the same rate. This is Oxygen-dependent choline dehydrogenase from Agrobacterium fabrum (strain C58 / ATCC 33970) (Agrobacterium tumefaciens (strain C58)).